The sequence spans 185 residues: Ribosome maturation factor RimM (185 aa).

A PRC barrel domain is found at 106–185 (TGDYYWKDLI…TIEVDWDPGF (80 aa)).

It belongs to the RimM family. Binds ribosomal protein uS19.

The protein localises to the cytoplasm. Functionally, an accessory protein needed during the final step in the assembly of 30S ribosomal subunit, possibly for assembly of the head region. Essential for efficient processing of 16S rRNA. May be needed both before and after RbfA during the maturation of 16S rRNA. It has affinity for free ribosomal 30S subunits but not for 70S ribosomes. This is Ribosome maturation factor RimM from Photorhabdus laumondii subsp. laumondii (strain DSM 15139 / CIP 105565 / TT01) (Photorhabdus luminescens subsp. laumondii).